The following is a 540-amino-acid chain: Glucose-6-phosphate isomerase (540 aa).

The active-site Proton donor is the Glu350. Catalysis depends on residues His381 and Lys503.

This sequence belongs to the GPI family.

The protein resides in the cytoplasm. It carries out the reaction alpha-D-glucose 6-phosphate = beta-D-fructose 6-phosphate. It participates in carbohydrate biosynthesis; gluconeogenesis. Its pathway is carbohydrate degradation; glycolysis; D-glyceraldehyde 3-phosphate and glycerone phosphate from D-glucose: step 2/4. Catalyzes the reversible isomerization of glucose-6-phosphate to fructose-6-phosphate. The sequence is that of Glucose-6-phosphate isomerase from Paraburkholderia phytofirmans (strain DSM 17436 / LMG 22146 / PsJN) (Burkholderia phytofirmans).